The chain runs to 691 residues: 1-butanol dehydrogenase (cytochrome c) (691 aa).

The first 38 residues, 1–38 (MLTTTFARKREESVPLRKGIQRALLGLSCLVLSTTSFA), serve as a signal peptide directing secretion. Glutamate 84 contacts pyrroloquinoline quinone. Cysteine 130 and cysteine 131 form a disulfide bridge. Pyrroloquinoline quinone contacts are provided by residues arginine 136, threonine 181, and 197-198 (GA). Glutamate 199 and aspartate 322 together coordinate Ca(2+). Aspartate 322 (proton acceptor) is an active-site residue. Residues lysine 349, 408-409 (NW), and valine 558 each bind pyrroloquinoline quinone. A Cytochrome c domain is found at 605 to 684 (DDVAEGTGLY…KIKAFILGTA (80 aa)). Positions 618, 621, 622, and 661 each coordinate heme c.

The protein belongs to the bacterial PQQ dehydrogenase family. As to quaternary structure, monomer. Requires pyrroloquinoline quinone as cofactor. Ca(2+) is required as a cofactor. It depends on heme c as a cofactor.

The protein localises to the periplasm. The enzyme catalyses butan-1-ol + 2 Fe(III)-[cytochrome c] = butanal + 2 Fe(II)-[cytochrome c] + 2 H(+). With respect to regulation, dehydrogenase activity is increased by ammonium ions. Involved in the metabolism of butane. Could be important in the detoxification of 1-butanol. Catalyzes the oxidation of 1-butanol to butyraldehyde. Also able to use 1-propanol, 2-pentanol, propionaldehyde and butyraldehyde as substrates. This chain is 1-butanol dehydrogenase (cytochrome c), found in Thauera butanivorans (strain ATCC 43655 / DSM 2080 / JCM 20651 / CCUG 51053 / NBRC 103042 / IAM 12574 / Bu B1211) (Pseudomonas butanovora).